We begin with the raw amino-acid sequence, 570 residues long: MSFDGMFTYGMTHELNEKIMGGRITKIHQPYKHDVIFHIRAKGKNQKLLLSAHPSYSRVHITAQAYENPSEPPMFCMLLRKHIEGGFIEKIEQAGLDRIMIFHIKSRNEIGDETVRKLYVEIMGRHSNIILTDAAENVIIDGLKHLSPSMNSYRTVLPGQDYKLPPAQDKISPLEASEDDILRHLSFQEGRLDKQIVDHFSGVSPLFAKEAVHRAGLANKVTLPKALLALFAEVKEHRFIPNITTVNGKEYFYLLELTHLKGEARRFDSLSELLDRFYFGKAERDRVKQQAQDLERFVVNERKKNANKIKKLEKTLEYSENAKEFQLYGELLTANLYMLKKGDKQAEVINYYDEESPTITIPLNPNKTPSENAQAYFTKYQKAKNSVAVVEEQIRLAQEEIEYFDQLIQQLSSASPRDISEIREELVEGKYLRPKQQKGQKKQKPHNPVLETYESTSGLTILVGKNNRQNEYLTTRVAARDDIWLHTKDIPGSHVVIRSSEPDEQTIMEAATIAAYFSKAKDSSSVPVDYTKIRHVKKPNGAKPGFVTYDSQHTVFVTPDADTVIKLKKS.

The NFACT-N domain stretch occupies residues 1-173 (MSFDGMFTYG…LPPAQDKISP (173 aa)). The segment at 179 to 281 (DDILRHLSFQ…ELLDRFYFGK (103 aa)) is hhH domain. 2 coiled-coil regions span residues 279–336 (FGKA…TANL) and 368–430 (TPSE…VEGK). The segment at 282–434 (AERDRVKQQA…ELVEGKYLRP (153 aa)) is coiled-coil-M (CCM). Positions 446-570 (HNPVLETYES…ADTVIKLKKS (125 aa)) are NFACT-R.

It belongs to the NEMF family. As to quaternary structure, associates with isolated or stalled 50S ribosomal subunits. Binds to RqcP. Interacts with ribosomal protein uL11. Displaced from the 50S subunit by thiostrepton. In crystallized 50S subunits RqcH is variously associated with A/P-site tRNA, P-site tRNA and RqcP, an E-site tRNA or A- and P-site tRNAs and RqcP2(YlmH).

Functionally, key component of the ribosome quality control system (RQC), a ribosome-associated complex that mediates the extraction of incompletely synthesized nascent chains from stalled ribosomes and their subsequent degradation. RqcH recruits Ala-charged tRNA, and with RqcP directs the elongation of stalled nascent chains on 50S ribosomal subunits, leading to non-templated C-terminal alanine extensions (Ala tail). The Ala tail promotes nascent chain degradation. RqcH, RqcP and charged tRNA(Ala) are necessary and sufficient to add an Ala tail to a model stalled nascent peptide; does not add Val. Binds the P-site tRNA in 50S ribosomal subunit, unwinds the anticodon stem and interacts with the splayed anticodon. Selectively binds tRNA(Ala) isoacceptors, even in the absence of the 50S ribosomal subunit. Adds between 1 and at least 8 Ala residues to the nascent chain; detection of the Ala tail requires either deletion of clpP or its inhibition. Binds to 50S ribosomal subunits, at least 30% of which contain a P-site tRNA and thus are obstructed. This is Rqc2 homolog RqcH from Bacillus subtilis (strain 168).